The sequence spans 353 residues: MPMSRAPRTARAELPKGAQARHVPVLLAEVLAALSLDRPGLAVDGTFGAGGYTRALLEAGPEVRVIAIDRDPTAIRGGADLVNAFGGRLRLVQGRFGELDTLIADQNEAQADWVVLDIGVSSMQIDEAQRGFSFRQDGPLDMRMGGEGPSAADLVNGEEETTLADILYHFGEERRSRAVARAIVEARRRAPIVTTAQLADLVAGVVRPEPGSPIHPATRSFQGLRIAVNDELGELVRGLHAAERVLKPGGRLAVVTFHSLEDRIVKQFFSARSGRAAQASRHVPGVERPAPKSFKLVTKGPVLPSEAETDVNPRSRSAKLRAGERTDAPAPPPLSAIETLASLPAPQGRGPRR.

S-adenosyl-L-methionine contacts are provided by residues 50–52, Asp69, Phe96, Asp117, and Gln124; that span reads GGY. The disordered stretch occupies residues 276–353; the sequence is AAQASRHVPG…PAPQGRGPRR (78 aa).

The protein belongs to the methyltransferase superfamily. RsmH family.

It is found in the cytoplasm. It catalyses the reaction cytidine(1402) in 16S rRNA + S-adenosyl-L-methionine = N(4)-methylcytidine(1402) in 16S rRNA + S-adenosyl-L-homocysteine + H(+). In terms of biological role, specifically methylates the N4 position of cytidine in position 1402 (C1402) of 16S rRNA. This chain is Ribosomal RNA small subunit methyltransferase H, found in Methylorubrum extorquens (strain CM4 / NCIMB 13688) (Methylobacterium extorquens).